The sequence spans 166 residues: uncharacterized protein (166 aa).

3 consecutive Pentapeptide repeat domains span residues 38-77, 78-117, and 118-157; these read GECLDCNLAGADLREFNLENARLNRSDLSGANLSGVNLRR, ALLDRANLTGANLSETDLTEAALTEANLAGADLSGANLER, and SFLRDVDLTGANLKGANLAWANLTAANLTDVDLEEAEFWE.

This is an uncharacterized protein from Synechocystis sp. (strain ATCC 27184 / PCC 6803 / Kazusa).